A 361-amino-acid chain; its full sequence is Chorismate synthase (361 aa).

Residue Arg48 participates in NADP(+) binding. Residues 125–127 (RSS), 238–239 (NA), Gly278, 293–297 (KPTSS), and Arg319 contribute to the FMN site.

This sequence belongs to the chorismate synthase family. Homotetramer. Requires FMNH2 as cofactor.

The catalysed reaction is 5-O-(1-carboxyvinyl)-3-phosphoshikimate = chorismate + phosphate. The protein operates within metabolic intermediate biosynthesis; chorismate biosynthesis; chorismate from D-erythrose 4-phosphate and phosphoenolpyruvate: step 7/7. Its function is as follows. Catalyzes the anti-1,4-elimination of the C-3 phosphate and the C-6 proR hydrogen from 5-enolpyruvylshikimate-3-phosphate (EPSP) to yield chorismate, which is the branch point compound that serves as the starting substrate for the three terminal pathways of aromatic amino acid biosynthesis. This reaction introduces a second double bond into the aromatic ring system. The polypeptide is Chorismate synthase (Vibrio anguillarum (strain ATCC 68554 / 775) (Listonella anguillarum)).